The following is a 235-amino-acid chain: Small ribosomal subunit protein uS2 (235 aa).

It belongs to the universal ribosomal protein uS2 family.

The sequence is that of Small ribosomal subunit protein uS2 from Geobacillus kaustophilus (strain HTA426).